The sequence spans 147 residues: MVHWTAEEKQLITGLWGKVNVADCGAEALARLLIVYPWTQRFFASFGNLSSPTAILGNPMVRAHGKKVLTSFGDAVKNLDNIKNTFAQLSELHCDKLHVDPENFRLLGDILIIVLAAHFTKDFTPECQAAWQKLVRVVAHALARKYH.

A Globin domain is found at 3–147 (HWTAEEKQLI…VAHALARKYH (145 aa)). 2 residues coordinate heme b: His-64 and His-93.

It belongs to the globin family. In terms of assembly, heterotetramer of two alpha chains and two beta chains. Red blood cells.

Involved in oxygen transport from the lung to the various peripheral tissues. This Anas platyrhynchos (Mallard) protein is Hemoglobin subunit beta (HBB).